Here is a 184-residue protein sequence, read N- to C-terminus: Gastrokine-1 (184 aa).

Residues M1–A20 form the signal peptide. The 95-residue stretch at N54–A148 folds into the BRICHOS domain. A disulfide bridge connects residues C81 and C140.

It belongs to the gastrokine family. In terms of tissue distribution, expressed in the stomach. Highly expressed specifically in surface cells of the antrum mucosa from where it is secreted.

Its subcellular location is the secreted. It is found in the cytoplasmic granule. The protein resides in the golgi apparatus. Has mitogenic activity and may be involved in maintaining the integrity of the gastric mucosal epithelium. The chain is Gastrokine-1 (Gkn1) from Mus musculus (Mouse).